Reading from the N-terminus, the 187-residue chain is Elongation factor P (187 aa).

Lys34 carries the post-translational modification N6-(3,6-diaminohexanoyl)-5-hydroxylysine.

The protein belongs to the elongation factor P family. In terms of processing, may be beta-lysylated on the epsilon-amino group of Lys-34 by the combined action of EpmA and EpmB, and then hydroxylated on the C5 position of the same residue by EpmC (if this protein is present). Lysylation is critical for the stimulatory effect of EF-P on peptide-bond formation. The lysylation moiety may extend toward the peptidyltransferase center and stabilize the terminal 3-CCA end of the tRNA. Hydroxylation of the C5 position on Lys-34 may allow additional potential stabilizing hydrogen-bond interactions with the P-tRNA.

It is found in the cytoplasm. It participates in protein biosynthesis; polypeptide chain elongation. Involved in peptide bond synthesis. Alleviates ribosome stalling that occurs when 3 or more consecutive Pro residues or the sequence PPG is present in a protein, possibly by augmenting the peptidyl transferase activity of the ribosome. Modification of Lys-34 is required for alleviation. This Thioalkalivibrio sulfidiphilus (strain HL-EbGR7) protein is Elongation factor P.